The following is a 333-amino-acid chain: Adenosine deaminase (333 aa).

Zn(2+)-binding residues include H12 and H14. H14 and D16 together coordinate substrate. Residues H14–D16, S141, and G170 each bind pentostatin. Residue G170 coordinates substrate. H197 is a binding site for Zn(2+). The pentostatin site is built by E200, H221, and D278. Catalysis depends on E200, which acts as the Proton donor. A Zn(2+)-binding site is contributed by D278. Residue D279 participates in substrate binding.

The protein belongs to the metallo-dependent hydrolases superfamily. Adenosine and AMP deaminases family. Adenosine deaminase subfamily. It depends on Zn(2+) as a cofactor.

The enzyme catalyses adenosine + H2O + H(+) = inosine + NH4(+). It catalyses the reaction 2'-deoxyadenosine + H2O + H(+) = 2'-deoxyinosine + NH4(+). In terms of biological role, catalyzes the hydrolytic deamination of adenosine and 2-deoxyadenosine. This is Adenosine deaminase from Salmonella typhimurium (strain LT2 / SGSC1412 / ATCC 700720).